The primary structure comprises 113 residues: Protein SPIRAL1-like 1 (113 aa).

Gly residues predominate over residues 1–12 (MGRGVSVGGGQS). The interval 1 to 50 (MGRGVSVGGGQSSLGYLFGSGEAPKPAINNAPAPSSETLPISADPSPKHV) is disordered. The segment covering 23-34 (APKPAINNAPAP) has biased composition (low complexity). Phosphoserine is present on serine 69. A disordered region spans residues 79-113 (QNTGNFLTDRPSTKVHAAPGGGSSLDYLFGGGGSN). Residues 97-113 (PGGGSSLDYLFGGGGSN) are compositionally biased toward gly residues.

Belongs to the SPIRAL1 family. Detected in pollen of mature flowers.

Functionally, acts redundantly with SPR1 in maintaining the cortical microtubules organization essential for anisotropic cell growth. This Arabidopsis thaliana (Mouse-ear cress) protein is Protein SPIRAL1-like 1 (SP1L1).